A 386-amino-acid polypeptide reads, in one-letter code: O-methyltransferase 11 (386 aa).

Ser207, Gly231, Asp254, Asp274, and Lys288 together coordinate S-adenosyl-L-homocysteine. Asp254 is an S-adenosyl-L-methionine binding site. His292 serves as the catalytic Proton acceptor.

Belongs to the class I-like SAM-binding methyltransferase superfamily. Cation-independent O-methyltransferase family. As to quaternary structure, homodimer.

The enzyme catalyses dopamine + S-adenosyl-L-methionine = 4-methoxytyramine + S-adenosyl-L-homocysteine + H(+). It carries out the reaction 3,4-dihydroxy-5-methoxyphenethylamine + S-adenosyl-L-methionine = 3-hydroxy-4,5-dimethoxyphenethylamine + S-adenosyl-L-homocysteine + H(+). The catalysed reaction is 3-hydroxy-4,5-dimethoxyphenethylamine + S-adenosyl-L-methionine = mescaline + S-adenosyl-L-homocysteine + H(+). It catalyses the reaction 4-hydroxy-3,5-dimethoxyphenethylamine + S-adenosyl-L-methionine = mescaline + S-adenosyl-L-homocysteine + H(+). The protein operates within aromatic compound metabolism. It participates in alkaloid biosynthesis. In terms of biological role, O-methyltransferase participating in the biosynthesis of natural products derived from phenylethylamine, including mescaline, a natural hallucinogen potentially used in psychotherapeutic treatments. Catalyzes the O-methylation of mescaline para hydroxyl groups, using dopamine, 3,4-dihydroxy-5-methoxyphenethylamine, 3-hydroxy-4,5-dimethoxyphenethylamine and 4-hydroxy-3,5-dimethoxyphenethylamine as substrates. The protein is O-methyltransferase 11 of Lophophora williamsii (Peyote).